The following is a 319-amino-acid chain: MIIVTGGAGFIGSNIVQGLNARGITDILVVDDLTDGHKCLNLADADIHDYMDKDDFLRRVEANEDFGPVEAIFHEGACSSTTEWDGRFVMAVNYEYTKSLLGWAVARKVPLLYASSASVYGMGPTFRESREFEHPLNMYAYSKFLFDCHLRRFAPGIDSQVVGLRYFNVYGPREQHKGSMASVAYHFHNQLNDSGRLRLFEGADGYGPGEQQRDFIHVDDVVAVNLWLLDNPGVRGIFNVGTGRAQSFNEVAHAALSWHKGSTAGGGIDYIAFPEHLRGRYQSYTQADITALRQAGYEGEFMPVEVGVPRYLEWLALRD.

NADP(+) contacts are provided by residues 10–11 (FI), 31–32 (DD), Lys-38, Lys-53, and 75–79 (EGACS). Tyr-139 serves as the catalytic Proton acceptor. Lys-143 contacts NADP(+). Asn-168 is a substrate binding site. NADP(+) contacts are provided by Val-169 and Lys-177. Lys-177 (proton acceptor) is an active-site residue. Residues Ser-179, His-186, 200–203 (FEGA), Arg-213, and Tyr-281 each bind substrate.

The protein belongs to the NAD(P)-dependent epimerase/dehydratase family. HldD subfamily. In terms of assembly, homopentamer. Requires NADP(+) as cofactor.

It carries out the reaction ADP-D-glycero-beta-D-manno-heptose = ADP-L-glycero-beta-D-manno-heptose. It functions in the pathway nucleotide-sugar biosynthesis; ADP-L-glycero-beta-D-manno-heptose biosynthesis; ADP-L-glycero-beta-D-manno-heptose from D-glycero-beta-D-manno-heptose 7-phosphate: step 4/4. Functionally, catalyzes the interconversion between ADP-D-glycero-beta-D-manno-heptose and ADP-L-glycero-beta-D-manno-heptose via an epimerization at carbon 6 of the heptose. This chain is ADP-L-glycero-D-manno-heptose-6-epimerase, found in Aromatoleum aromaticum (strain DSM 19018 / LMG 30748 / EbN1) (Azoarcus sp. (strain EbN1)).